The chain runs to 451 residues: Phosphoglucosamine mutase (451 aa).

The active-site Phosphoserine intermediate is Ser-102. Positions 102, 242, 244, and 246 each coordinate Mg(2+). Ser-102 is modified (phosphoserine).

Belongs to the phosphohexose mutase family. It depends on Mg(2+) as a cofactor. Activated by phosphorylation.

It carries out the reaction alpha-D-glucosamine 1-phosphate = D-glucosamine 6-phosphate. Its function is as follows. Catalyzes the conversion of glucosamine-6-phosphate to glucosamine-1-phosphate. The chain is Phosphoglucosamine mutase from Staphylococcus carnosus (strain TM300).